The following is a 762-amino-acid chain: 5-methyltetrahydropteroyltriglutamate--homocysteine methyltransferase (762 aa).

5-methyltetrahydropteroyltri-L-glutamate contacts are provided by residues 17–20 (REWK) and Lys-111. L-homocysteine-binding positions include 435-437 (IGS) and Glu-488. L-methionine is bound by residues 435–437 (IGS) and Glu-488. 5-methyltetrahydropteroyltri-L-glutamate contacts are provided by residues 519–520 (RC) and Trp-565. Residue Asp-603 participates in L-homocysteine binding. Asp-603 contacts L-methionine. A 5-methyltetrahydropteroyltri-L-glutamate-binding site is contributed by Glu-609. The Zn(2+) site is built by His-645, Cys-647, and Glu-669. The active-site Proton donor is the His-698. Position 730 (Cys-730) interacts with Zn(2+).

This sequence belongs to the vitamin-B12 independent methionine synthase family. The cofactor is Zn(2+).

The enzyme catalyses 5-methyltetrahydropteroyltri-L-glutamate + L-homocysteine = tetrahydropteroyltri-L-glutamate + L-methionine. It functions in the pathway amino-acid biosynthesis; L-methionine biosynthesis via de novo pathway; L-methionine from L-homocysteine (MetE route): step 1/1. In terms of biological role, catalyzes the transfer of a methyl group from 5-methyltetrahydrofolate to homocysteine resulting in methionine formation. The sequence is that of 5-methyltetrahydropteroyltriglutamate--homocysteine methyltransferase from Bacillus anthracis (strain CDC 684 / NRRL 3495).